A 255-amino-acid chain; its full sequence is Aliphatic sulfonates import ATP-binding protein SsuB (255 aa).

In terms of domain architecture, ABC transporter spans 7–231 (IKEKAFVQEG…PRNRTTPDFQ (225 aa)). 39 to 46 (GPSGCGKS) is an ATP binding site.

It belongs to the ABC transporter superfamily. Aliphatic sulfonates importer (TC 3.A.1.17.2) family. The complex is composed of two ATP-binding proteins (SsuB), two transmembrane proteins (SsuC) and a solute-binding protein (SsuA).

It is found in the cell membrane. It catalyses the reaction ATP + H2O + aliphatic sulfonate-[sulfonate-binding protein]Side 1 = ADP + phosphate + aliphatic sulfonateSide 2 + [sulfonate-binding protein]Side 1.. Part of the ABC transporter complex SsuABC involved in aliphatic sulfonates import. Responsible for energy coupling to the transport system. Is also involved in taurine transport. The chain is Aliphatic sulfonates import ATP-binding protein SsuB from Bacillus subtilis (strain 168).